The primary structure comprises 408 residues: Homogentisate geranylgeranyltransferase (408 aa).

Residues 1 to 68 (MQATTAAAAA…SAISQATSPR (68 aa)) constitute a chloroplast transit peptide. The next 9 helical transmembrane spans lie at 122 to 142 (HTIF…MKSI), 149 to 169 (VLKG…YVVG), 194 to 214 (SVAT…SIGI), 217 to 237 (GSVP…AYSI), 248 to 268 (ALLA…LAFF), 286 to 306 (LVFA…FKDI), 329 to 349 (VYQL…VVGA), 352 to 372 (THLL…LTLW), and 386 to 406 (VTSF…LIPF).

Belongs to the UbiA prenyltransferase family.

It is found in the plastid. It localises to the chloroplast membrane. The catalysed reaction is homogentisate + (2E,6E,10E)-geranylgeranyl diphosphate + H(+) = 6-geranylgeranyl-2-methylbenzene-1,4-diol + CO2 + diphosphate. The protein operates within cofactor biosynthesis; tocopherol biosynthesis. In terms of biological role, involved in the synthesis of tocotrienol (vitamin E). Catalyzes the condensation of homogentisate and geranylgeranyl diphosphate to form 2-methyl-6-geranylgeranylbenzoquinol. Possesses low activity with phytyl diphosphate as substrate. This Triticum aestivum (Wheat) protein is Homogentisate geranylgeranyltransferase.